A 199-amino-acid chain; its full sequence is Holliday junction branch migration complex subunit RuvA (199 aa).

Positions M1–R64 are domain I. The segment at T65 to E143 is domain II. Residues A144–A154 are flexible linker. A domain III region spans residues A154–K199.

It belongs to the RuvA family. Homotetramer. Forms an RuvA(8)-RuvB(12)-Holliday junction (HJ) complex. HJ DNA is sandwiched between 2 RuvA tetramers; dsDNA enters through RuvA and exits via RuvB. An RuvB hexamer assembles on each DNA strand where it exits the tetramer. Each RuvB hexamer is contacted by two RuvA subunits (via domain III) on 2 adjacent RuvB subunits; this complex drives branch migration. In the full resolvosome a probable DNA-RuvA(4)-RuvB(12)-RuvC(2) complex forms which resolves the HJ.

It localises to the cytoplasm. Functionally, the RuvA-RuvB-RuvC complex processes Holliday junction (HJ) DNA during genetic recombination and DNA repair, while the RuvA-RuvB complex plays an important role in the rescue of blocked DNA replication forks via replication fork reversal (RFR). RuvA specifically binds to HJ cruciform DNA, conferring on it an open structure. The RuvB hexamer acts as an ATP-dependent pump, pulling dsDNA into and through the RuvAB complex. HJ branch migration allows RuvC to scan DNA until it finds its consensus sequence, where it cleaves and resolves the cruciform DNA. This is Holliday junction branch migration complex subunit RuvA from Geobacter metallireducens (strain ATCC 53774 / DSM 7210 / GS-15).